The chain runs to 369 residues: Molybdenum import ATP-binding protein ModC (369 aa).

Positions 7 to 243 (PGQAGIHARF…LDLPMAMTDD (237 aa)) constitute an ABC transporter domain. Residue 41 to 48 (GQSGSGKT) coordinates ATP. The 66-residue stretch at 304-369 (EGSILNVLAV…AQIKAVSLLA (66 aa)) folds into the Mop domain.

Belongs to the ABC transporter superfamily. Molybdate importer (TC 3.A.1.8) family. In terms of assembly, the complex is composed of two ATP-binding proteins (ModC), two transmembrane proteins (ModB) and a solute-binding protein (ModA).

The protein resides in the cell inner membrane. It catalyses the reaction molybdate(out) + ATP + H2O = molybdate(in) + ADP + phosphate + H(+). Its function is as follows. Part of the ABC transporter complex ModABC involved in molybdenum import. Responsible for energy coupling to the transport system. In Bordetella bronchiseptica (strain ATCC BAA-588 / NCTC 13252 / RB50) (Alcaligenes bronchisepticus), this protein is Molybdenum import ATP-binding protein ModC.